The sequence spans 446 residues: Xylose isomerase 2 (446 aa).

Active-site residues include histidine 109 and aspartate 112. Glutamate 240, glutamate 276, histidine 279, aspartate 304, aspartate 315, aspartate 317, and aspartate 347 together coordinate Mg(2+).

Belongs to the xylose isomerase family. As to quaternary structure, homotetramer. Requires Mg(2+) as cofactor.

The protein resides in the cytoplasm. The catalysed reaction is alpha-D-xylose = alpha-D-xylulofuranose. The chain is Xylose isomerase 2 from Xanthomonas campestris pv. campestris (strain 8004).